Here is a 351-residue protein sequence, read N- to C-terminus: Photosystem II D2 protein (351 aa).

Residues 39-59 traverse the membrane as a helical segment; it reads CAYLALGAWFTGTTFVSSWYT. Histidine 116 contacts chlorophyll a. The chain crosses the membrane as a helical span at residues 123-139; that stretch reads GFCLRQFEIARLVGLRP. Residues glutamine 128 and asparagine 141 each contribute to the pheophytin a site. A helical membrane pass occupies residues 151 to 164; that stretch reads VFVSVFLLYPLGQA. Chlorophyll a is bound at residue histidine 196. A helical transmembrane segment spans residues 206–226; the sequence is GALLCAIHGATVENTLFEDGE. Positions 213 and 260 each coordinate a plastoquinone. Histidine 213 contributes to the Fe cation binding site. Histidine 267 lines the Fe cation pocket. Residues 277–293 traverse the membrane as a helical segment; it reads GLWVSSIGIVGLALNLR.

Belongs to the reaction center PufL/M/PsbA/D family. In terms of assembly, PSII is composed of 1 copy each of membrane proteins PsbA, PsbB, PsbC, PsbD, PsbE, PsbF, PsbH, PsbI, PsbJ, PsbK, PsbL, PsbM, PsbT, PsbY, PsbZ, Psb30/Ycf12, at least 3 peripheral proteins of the oxygen-evolving complex and a large number of cofactors. It forms dimeric complexes. The D1/D2 heterodimer binds P680, chlorophylls that are the primary electron donor of PSII, and subsequent electron acceptors. It shares a non-heme iron and each subunit binds pheophytin, quinone, additional chlorophylls, carotenoids and lipids. There is also a Cl(-1) ion associated with D1 and D2, which is required for oxygen evolution. The PSII complex binds additional chlorophylls, carotenoids and specific lipids. is required as a cofactor.

It is found in the plastid. Its subcellular location is the chloroplast thylakoid membrane. The catalysed reaction is 2 a plastoquinone + 4 hnu + 2 H2O = 2 a plastoquinol + O2. Its function is as follows. Photosystem II (PSII) is a light-driven water:plastoquinone oxidoreductase that uses light energy to abstract electrons from H(2)O, generating O(2) and a proton gradient subsequently used for ATP formation. It consists of a core antenna complex that captures photons, and an electron transfer chain that converts photonic excitation into a charge separation. The D1/D2 (PsbA/PsbD) reaction center heterodimer binds P680, the primary electron donor of PSII as well as several subsequent electron acceptors. D2 is needed for assembly of a stable PSII complex. In Cyanidium caldarium (Red alga), this protein is Photosystem II D2 protein.